The sequence spans 599 residues: Elongation factor 4 (599 aa).

A tr-type G domain is found at 5 to 187 (NRIRNFSIVA…AIVTRLPAPK (183 aa)). GTP contacts are provided by residues 17–22 (DHGKST) and 134–137 (NKVD).

The protein belongs to the TRAFAC class translation factor GTPase superfamily. Classic translation factor GTPase family. LepA subfamily.

The protein resides in the cell inner membrane. The enzyme catalyses GTP + H2O = GDP + phosphate + H(+). Required for accurate and efficient protein synthesis under certain stress conditions. May act as a fidelity factor of the translation reaction, by catalyzing a one-codon backward translocation of tRNAs on improperly translocated ribosomes. Back-translocation proceeds from a post-translocation (POST) complex to a pre-translocation (PRE) complex, thus giving elongation factor G a second chance to translocate the tRNAs correctly. Binds to ribosomes in a GTP-dependent manner. This is Elongation factor 4 from Jannaschia sp. (strain CCS1).